Here is a 480-residue protein sequence, read N- to C-terminus: Phenylalanine--tRNA ligase alpha subunit (480 aa).

The L-phenylalanine site is built by T324 and F407. E409 serves as a coordination point for Mg(2+). Residue F432 participates in L-phenylalanine binding.

The protein belongs to the class-II aminoacyl-tRNA synthetase family. Phe-tRNA synthetase alpha subunit type 2 subfamily. In terms of assembly, tetramer of two alpha and two beta subunits. The cofactor is Mg(2+).

Its subcellular location is the cytoplasm. The enzyme catalyses tRNA(Phe) + L-phenylalanine + ATP = L-phenylalanyl-tRNA(Phe) + AMP + diphosphate + H(+). This is Phenylalanine--tRNA ligase alpha subunit from Methanocaldococcus jannaschii (strain ATCC 43067 / DSM 2661 / JAL-1 / JCM 10045 / NBRC 100440) (Methanococcus jannaschii).